The sequence spans 240 residues: tRNA (guanine-N(7)-)-methyltransferase (240 aa).

A disordered region spans residues 1–20 (MTESHDTPITSDGEARPHRR). Glu70, Glu95, Asp122, and Asp145 together coordinate S-adenosyl-L-methionine. Asp145 is an active-site residue. Residues Lys149, Asp181, and 218-221 (TKFE) contribute to the substrate site.

This sequence belongs to the class I-like SAM-binding methyltransferase superfamily. TrmB family.

The enzyme catalyses guanosine(46) in tRNA + S-adenosyl-L-methionine = N(7)-methylguanosine(46) in tRNA + S-adenosyl-L-homocysteine. It participates in tRNA modification; N(7)-methylguanine-tRNA biosynthesis. In terms of biological role, catalyzes the formation of N(7)-methylguanine at position 46 (m7G46) in tRNA. The polypeptide is tRNA (guanine-N(7)-)-methyltransferase (Pseudomonas putida (strain ATCC 700007 / DSM 6899 / JCM 31910 / BCRC 17059 / LMG 24140 / F1)).